A 492-amino-acid polypeptide reads, in one-letter code: N-succinylglutamate 5-semialdehyde dehydrogenase (492 aa).

An NAD(+)-binding site is contributed by 220 to 225; sequence GSASTG. Active-site residues include glutamate 243 and cysteine 277.

This sequence belongs to the aldehyde dehydrogenase family. AstD subfamily.

The catalysed reaction is N-succinyl-L-glutamate 5-semialdehyde + NAD(+) + H2O = N-succinyl-L-glutamate + NADH + 2 H(+). Its pathway is amino-acid degradation; L-arginine degradation via AST pathway; L-glutamate and succinate from L-arginine: step 4/5. Catalyzes the NAD-dependent reduction of succinylglutamate semialdehyde into succinylglutamate. This chain is N-succinylglutamate 5-semialdehyde dehydrogenase, found in Salmonella dublin (strain CT_02021853).